We begin with the raw amino-acid sequence, 1228 residues long: Calcium-transporting ATPase (1228 aa).

Topologically, residues 1-63 (MEEVIKNAHT…FELILNQFDD (63 aa)) are cytoplasmic. Residues 64 to 81 (LLVKILLLAAFISFVLTL) traverse the membrane as a helical segment. The Extracellular segment spans residues 82 to 92 (LDMKHKKIEIC). Residues 93-112 (DFIEPLVIVLILILNAAVGV) form a helical membrane-spanning segment. Topologically, residues 113–270 (WQECNAEKSL…IDLFGQQLSK (158 aa)) are cytoplasmic. The chain crosses the membrane as a helical span at residues 271–291 (IIFVICVTVWIINFKHFSDPI). The Extracellular portion of the chain corresponds to 292–300 (HGSFLYGCL). The helical transmembrane segment at 301-321 (YYFKISVALAVAAIPEGLPAV) threads the bilayer. Over 322-974 (ITTCLALGTR…IYNNMKAFIR (653 aa)) the chain is Cytoplasmic. Catalysis depends on Asp358, which acts as the 4-aspartylphosphate intermediate. Disordered stretches follow at residues 452-478 (MKNDLNNNNNNNNNSSRSGAKRNIPLK) and 562-613 (MPAE…LKNA). A compositionally biased stretch (polar residues) spans 589 to 604 (FFSSKNDNSHITSTLN). Residue Lys716 participates in ATP binding. Residues 975–994 (YLISSNIGEVASIFITALLG) traverse the membrane as a helical segment. The Extracellular portion of the chain corresponds to 995-1000 (IPDSLA). Residues 1001–1021 (PVQLLWVNLVTDGLPATALGF) traverse the membrane as a helical segment. Topologically, residues 1022 to 1042 (NPPEHDVMKCKPRHKNDNLIN) are cytoplasmic. The helical transmembrane segment at 1043 to 1067 (GLTLLRYIIIGTYVGIATVSIFVYW) threads the bilayer. At 1068-1118 (FLFYPDSDMHTLINFYQLSHYNQCKAWNNFRVNKVYDMSEDHCSYFSAGKI) the chain is on the extracellular side. A helical membrane pass occupies residues 1119–1140 (KASTLSLSVLVLIEMFNALNAL). At 1141 to 1151 (SEYNSLFEIPP) the chain is on the cytoplasmic side. Residues 1152 to 1172 (WRNMYLVLATIGSLLLHVLIL) traverse the membrane as a helical segment. At 1173–1185 (YIPPLARIFGVVP) the chain is on the extracellular side. A helical transmembrane segment spans residues 1186–1206 (LSAYDWFLVFLWSFPVIILDE). The Cytoplasmic segment spans residues 1207 to 1228 (IIKFYAKRKLKEEQRTKKIKID).

This sequence belongs to the cation transport ATPase (P-type) (TC 3.A.3) family.

The protein localises to the membrane. The catalysed reaction is Ca(2+)(in) + ATP + H2O = Ca(2+)(out) + ADP + phosphate + H(+). Functionally, this magnesium-dependent enzyme catalyzes the hydrolysis of ATP coupled with the transport of the calcium. The chain is Calcium-transporting ATPase (ATP6) from Plasmodium falciparum (isolate K1 / Thailand).